Consider the following 610-residue polypeptide: E-selectin (610 aa).

Residues 1–21 (MIASQFLSALTLVLLIKESGA) form the signal peptide. A C-type lectin domain is found at 22–139 (WSYNTSTEAM…CSKKKLALCY (118 aa)). The Extracellular segment spans residues 22-556 (WSYNTSTEAM…CEAPTESNIP (535 aa)). N-linked (GlcNAc...) asparagine glycosylation occurs at asparagine 25. 5 cysteine pairs are disulfide-bonded: cysteine 40–cysteine 138, cysteine 111–cysteine 130, cysteine 143–cysteine 154, cysteine 148–cysteine 163, and cysteine 165–cysteine 174. Residues glutamate 101, asparagine 103, and glutamate 109 each contribute to the Ca(2+) site. A carbohydrate is bound by residues 101–109 (EPNNRQKDE), 113–118 (EIYIKR), and 126–128 (NDE). 2 residues coordinate Ca(2+): asparagine 126 and aspartate 127. The 36-residue stretch at 140–175 (TAACTNTSCSGHGECVETINNYTCKCDPGFSGLKCE) folds into the EGF-like domain. N-linked (GlcNAc...) asparagine glycosylation is found at asparagine 145 and asparagine 160. Sushi domains follow at residues 178–239 (VNCT…ACNV), 240–301 (VECD…TCKA), 303–364 (TCRA…VCEA), 366–427 (QCTA…TCEA), 429–490 (RCDA…SCQV), and 491–549 (VKCS…TCEA). Asparagine 179, asparagine 199, and asparagine 203 each carry an N-linked (GlcNAc...) asparagine glycan. Disulfide bonds link cysteine 180-cysteine 224, cysteine 193-cysteine 206, cysteine 210-cysteine 237, cysteine 242-cysteine 286, cysteine 255-cysteine 268, cysteine 272-cysteine 299, cysteine 304-cysteine 349, cysteine 335-cysteine 362, cysteine 367-cysteine 412, cysteine 398-cysteine 425, cysteine 430-cysteine 475, cysteine 461-cysteine 488, cysteine 493-cysteine 534, and cysteine 520-cysteine 547. A glycan (N-linked (GlcNAc...) asparagine) is linked at asparagine 265. N-linked (GlcNAc...) asparagine glycans are attached at residues asparagine 312 and asparagine 332. Residues asparagine 503 and asparagine 527 are each glycosylated (N-linked (GlcNAc...) asparagine). Residues 557-578 (LVAGLSAAGLSLLTLAPFLLWL) form a helical membrane-spanning segment. At 579–610 (RKCLRKAKKFVPASSCQSLESDGSYQKPSYIL) the chain is on the cytoplasmic side.

This sequence belongs to the selectin/LECAM family. In terms of assembly, interacts with SELPLG/PSGL1 and PODXL2 through the sialyl Lewis X epitope. SELPLG sulfation appears not to be required for this interaction.

It is found in the cell membrane. Functionally, cell-surface glycoprotein having a role in immunoadhesion. Mediates in the adhesion of blood neutrophils in cytokine-activated endothelium through interaction with SELPLG/PSGL1. May have a role in capillary morphogenesis. The protein is E-selectin (SELE) of Homo sapiens (Human).